Consider the following 729-residue polypeptide: Solute carrier family 15 member 2 (729 aa).

A disordered region spans residues Met-1–Ser-34. Residues Met-1–Arg-57 lie on the Cytoplasmic side of the membrane. At Ser-9 the chain carries Phosphoserine. Position 12 is a phosphothreonine (Thr-12). Over residues Pro-24–Pro-33 the composition is skewed to pro residues. Position 28 is a phosphoserine (Ser-28). A helical membrane pass occupies residues Phe-58–Asn-78. The Extracellular segment spans residues Glu-79 to Thr-83. A helical transmembrane segment spans residues Ser-84–Ala-104. Residues Asp-105–Thr-113 are Cytoplasmic-facing. The helical transmembrane segment at Ile-114 to Pro-134 threads the bilayer. At Ile-135–Gln-139 the chain is on the extracellular side. The chain crosses the membrane as a helical span at residues Val-140 to Ile-160. Residues Lys-161–Tyr-183 are Cytoplasmic-facing. A helical membrane pass occupies residues Phe-184–Met-204. Residues Leu-205–Tyr-217 are Extracellular-facing. Residues Ala-218–Gly-238 traverse the membrane as a helical segment. The Cytoplasmic segment spans residues Ser-239–Asp-295. The chain crosses the membrane as a helical span at residues Val-296–Leu-316. At Asp-317 to Gln-343 the chain is on the extracellular side. Residues Met-344 to Tyr-364 form a helical membrane-spanning segment. Residues Arg-365–Met-380 lie on the Cytoplasmic side of the membrane. Residues Ala-381–Ile-401 traverse the membrane as a helical segment. Topologically, residues Asn-402–Gln-611 are extracellular. Residues Asn-402–Gln-611 are extracellular domain (ECD). Asn-435, Asn-472, Asn-528, Asn-567, and Asn-587 each carry an N-linked (GlcNAc...) asparagine glycan. The chain crosses the membrane as a helical span at residues Leu-612–Phe-632. The Cytoplasmic portion of the chain corresponds to Ser-633–Ser-643. Residues Val-644 to Ala-664 traverse the membrane as a helical segment. At Gln-665–Glu-674 the chain is on the extracellular side. A helical membrane pass occupies residues Phe-675–Tyr-695. Residues Tyr-696 to Leu-729 are Cytoplasmic-facing.

It belongs to the major facilitator superfamily. Proton-dependent oligopeptide transporter (POT/PTR) (TC 2.A.17) family. Interacts (via extracellular domain region) with trypsin. In terms of tissue distribution, expressed in kidney. Not detected in intestine. Highly expressed in macrophages.

The protein resides in the apical cell membrane. It is found in the cytoplasmic vesicle. Its subcellular location is the phagosome membrane. The protein localises to the cell membrane. It catalyses the reaction a dipeptide(out) + 2 H(+)(out) = a dipeptide(in) + 2 H(+)(in). The catalysed reaction is N-acetyl-D-muramoyl-L-alanyl-D-isoglutamine(out) + 3 H(+)(out) = N-acetyl-D-muramoyl-L-alanyl-D-isoglutamine(in) + 3 H(+)(in). It carries out the reaction glycyl-L-leucine(out) + 2 H(+)(out) = glycyl-L-leucine(in) + 2 H(+)(in). The enzyme catalyses glycyl-L-lysine(out) + 2 H(+)(out) = glycyl-L-lysine(in) + 2 H(+)(in). It catalyses the reaction glycyl-L-glutamate(out) + 3 H(+)(out) = glycyl-L-glutamate(in) + 3 H(+)(in). The catalysed reaction is L-alanyl-L-alanine(out) + 2 H(+)(out) = L-alanyl-L-alanine(in) + 2 H(+)(in). It carries out the reaction an L-amino acid tripeptide(out) + 2 H(+)(out) = an L-amino acid tripeptide(in) + 2 H(+)(in). The enzyme catalyses carnosine(out) + 2 H(+)(out) = carnosine(in) + 2 H(+)(in). Proton-coupled amino-acid transporter that transports oligopeptides of 2 to 4 amino acids with a preference for dipeptides. Transports neutral and anionic dipeptides with a proton to peptide stoichiometry of 2:1 or 3:1. In kidney, involved in the absorption of circulating di- and tripeptides from the glomerular filtrate. Can also transport beta-lactam antibiotics, such as the aminocephalosporin cefadroxil, and other antiviral and anticancer drugs. Transports the dipeptide-like aminopeptidase inhibitor bestatin. Also able to transport carnosine. Involved in innate immunity by promoting the detection of microbial pathogens by NOD-like receptors (NLRs). Mediates transport of bacterial peptidoglycans across the plasma membrane or, in macrophages, the phagosome membrane: catalyzes the transport of certain bacterial peptidoglycans, such as muramyl dipeptide (MDP), the NOD2 ligand. The polypeptide is Solute carrier family 15 member 2 (Homo sapiens (Human)).